We begin with the raw amino-acid sequence, 229 residues long: CMRF35-like molecule 6 (229 aa).

Residues methionine 1 to glycine 21 form the signal peptide. One can recognise an Ig-like V-type domain in the interval histidine 22–lysine 126. Residues histidine 22 to histidine 188 are Extracellular-facing. Cysteines 43 and 110 form a disulfide. Residues asparagine 90 and asparagine 99 are each glycosylated (N-linked (GlcNAc...) asparagine). Residues phenylalanine 189–tryptophan 209 traverse the membrane as a helical segment. The Cytoplasmic segment spans residues valine 210–glutamine 229.

It belongs to the CD300 family.

The protein localises to the cell membrane. The polypeptide is CMRF35-like molecule 6 (Cd300c) (Mus musculus (Mouse)).